The primary structure comprises 141 residues: Large ribosomal subunit protein uL6 (141 aa).

Belongs to the universal ribosomal protein uL6 family.

The chain is Large ribosomal subunit protein uL6 from Haemonchus contortus (Barber pole worm).